The chain runs to 360 residues: Peptide chain release factor 1 (360 aa).

The residue at position 235 (Gln-235) is an N5-methylglutamine. Residues 285-313 (KRQQAEASTRRNLLGSGDRSDRNRTYNFP) form a disordered region.

The protein belongs to the prokaryotic/mitochondrial release factor family. Post-translationally, methylated by PrmC. Methylation increases the termination efficiency of RF1.

The protein resides in the cytoplasm. Its function is as follows. Peptide chain release factor 1 directs the termination of translation in response to the peptide chain termination codons UAG and UAA. This is Peptide chain release factor 1 from Klebsiella pneumoniae (strain 342).